Here is a 371-residue protein sequence, read N- to C-terminus: Cytochrome b (371 aa).

Transmembrane regions (helical) follow at residues 25–45 (FGSMLLTCLMLQVLTGFFLAI), 69–90 (WIMQNTHAIGASLFFICIYIHI), 105–125 (WLSGVTLLMTLMATAFFGYVL), and 170–190 (FFALHFILPFIIISLSSIHII). 2 residues coordinate heme b: H75 and H89. Heme b-binding residues include H174 and H188. H193 provides a ligand contact to a ubiquinone. 4 helical membrane passes run 218–238 (YKDLMTTTSMIILLFIILSFS), 280–300 (LGGTLALLMSILILTLPPFTH), 312–332 (LSQTLFWTLIATFVMITWTAT), and 339–358 (FITISQLTSIFYFSFFIMNP).

The protein belongs to the cytochrome b family. In terms of assembly, the cytochrome bc1 complex contains 3 respiratory subunits (MT-CYB, CYC1 and UQCRFS1), 2 core proteins (UQCRC1 and UQCRC2) and probably 6 low-molecular weight proteins. Requires heme b as cofactor.

The protein resides in the mitochondrion inner membrane. Functionally, component of the ubiquinol-cytochrome c reductase complex (complex III or cytochrome b-c1 complex) that is part of the mitochondrial respiratory chain. The b-c1 complex mediates electron transfer from ubiquinol to cytochrome c. Contributes to the generation of a proton gradient across the mitochondrial membrane that is then used for ATP synthesis. This Micrurus fulvius (Eastern coral snake) protein is Cytochrome b (MT-CYB).